The chain runs to 452 residues: Gamma conglutin 1 (452 aa).

Positions 1–33 (MAKNMAPILHILVISLSYSFLFVTSSSQNSQSL) are cleaved as a signal peptide. The region spanning 61–432 (HWGNILKRTP…DLARSRVGFN (372 aa)) is the Peptidase A1 domain. 5 cysteine pairs are disulfide-bonded: C89–C179, C103–C116, C108–C134, C119–C129, and C353–C394. An N-linked (GlcNAc...) asparagine glycan is attached at N131.

The protein belongs to the peptidase A1 family. As to quaternary structure, two-subunit monomeric unit made of alpha and beta subunits coupled by disulfide bonds (at pH 4.5 and under non-reducing conditions). Monomeric alpha and beta subunits in reducing conditions. Can also form oligomers including dimer, tetramer and cyclic hexamer (trimer of dimers) (at pH &gt; 5.5). Component of globulins complexes which accumulate in seeds. Interacts with flavonoids (e.g. apigenin glucosides) present in globulins complexes. In terms of processing, glycosylated on alpha chain at Asn-131; identified N-glycans bound are Man(2)(Xyl)(Fuc)GlcNAc(2), Man(3)(Xyl)(Fuc)GlcNAc(2), GlcNAcMan(3)(Xyl)(Fuc)GlcNAc(2) and GlcNAc(2)Man(3)(Xyl)(Fuc)GlcNAc(2). In terms of tissue distribution, expressed in developing seeds and in the young roots and cotyledons of germinating seeds and young seedlings.

It is found in the secreted. The protein localises to the extracellular space. Sulfur-rich seed storage protein that remains undegraded at germination. The uncleaved form exhibits some inhibitory activity against GH11 xylanase from T.longibrachiatum, more at pH 7 than at pH 5.3, but not against GH12 xyloglucan-specific endoglucanase (XEG) from A.aculeatus. Binds to model phospholipid membranes containing dimyristoyl phosphatidylglycerol (DMPG), dioleoyl phosphatidic acid (DOPA) or mixture of dimyristoyl phosphatidylcholine and dimyristoyl phosphatidylglycerol (DMPC:DMPG), or mixture of dioleoyl phosphatidic acid and dioleoyl phosphatidylcholine (DOPC:DOPA). The chain is Gamma conglutin 1 from Lupinus albus (White lupine).